The sequence spans 848 residues: Coiled-coil domain-containing protein 110 (848 aa).

The disordered stretch occupies residues 41 to 62; that stretch reads SEGVKESGGNEPEYGCASEPEN. Positions 442–794 form a coiled coil; that stretch reads LQNYLKESLQ…LSDKVSSQNN (353 aa). Position 620 is a phosphoserine (Ser620).

The protein localises to the nucleus. The protein is Coiled-coil domain-containing protein 110 (Ccdc110) of Mus musculus (Mouse).